The following is a 351-amino-acid chain: Outer membrane protein A (351 aa).

Residues 1-21 (MKKTAIAITVALAGFATVAQA) form the signal peptide. 8 beta stranded membrane passes run 27-37 (TWYTGAKLGWS), 55-66 (QLGAGAFGGYQV), 70-78 (VGFEMGYDW), 96-107 (QGVQLTAKLGYP), 112-120 (LDVYTRLGG), 147-156 (PVFAGGVEWA), 161-168 (IATRLEYQ), and 187-195 (LLSLGVSYR). 4 tandem repeats follow at residues 206-207 (AP), 208-209 (AP), 210-211 (AP), and 212-213 (AP). Positions 206-213 (APAPAPAP) are 4 X 2 AA tandem repeats of A-P. The region spanning 215–343 (VQTKHFTLKS…RVEIEVKGIK (129 aa)) is the OmpA-like domain. Cys-316 and Cys-328 are disulfide-bonded.

The protein belongs to the outer membrane OOP (TC 1.B.6) superfamily. OmpA family. Monomer and homodimer.

Its subcellular location is the cell outer membrane. Functionally, with TolR probably plays a role in maintaining the position of the peptidoglycan cell wall in the periplasm. Acts as a porin with low permeability that allows slow penetration of small solutes; an internal gate slows down solute passage. Its function is as follows. Required for conjugation with F-type plasmids; probably serves as the mating receptor on recipient cells. The polypeptide is Outer membrane protein A (Shigella dysenteriae).